Reading from the N-terminus, the 359-residue chain is N-acetylneuraminate-9-phosphate synthase (359 aa).

An N6-acetyllysine mark is found at K61, K74, and K79. A Phosphoserine modification is found at S275. K290 is modified (N6-acetyllysine). Residues 294–353 (SVVAKVKIPEGTILTMDMLTVKVGEPKGYPPEDIFNLVGKKVLVTVEEDDTIMEELVDNH) enclose the AFP-like domain.

In terms of tissue distribution, ubiquitous.

It catalyses the reaction aldehydo-N-acetyl-D-mannosamine 6-phosphate + phosphoenolpyruvate + H2O = N-acetylneuraminate 9-phosphate + phosphate. The catalysed reaction is aldehydo-D-mannose 6-phosphate + phosphoenolpyruvate + H2O = 3-deoxy-D-glycero-beta-D-galacto-non-2-ulopyranosonate 9-phosphate + phosphate. Functionally, catalyzes the condensation of phosphoenolpyruvate (PEP) and N-acetylmannosamine 6-phosphate (ManNAc-6-P) to synthesize N-acetylneuraminate-9-phosphate (Neu5Ac-9-P). Also catalyzes the condensation of PEP and D-mannose 6-phosphate (Man-6-P) to produce 3-deoxy-D-glycero-beta-D-galacto-non-2-ulopyranosonate 9-phosphate (KDN-9-P). Neu5Ac-9-P and KDN-9-P are the phosphorylated forms of sialic acids N-acetylneuraminic acid (Neu5Ac) and deaminoneuraminic acid (KDN), respectively. Required for brain and skeletal development. The polypeptide is N-acetylneuraminate-9-phosphate synthase (Homo sapiens (Human)).